A 100-amino-acid chain; its full sequence is Large ribosomal subunit protein uL23 (100 aa).

It belongs to the universal ribosomal protein uL23 family. In terms of assembly, part of the 50S ribosomal subunit. Contacts protein L29, and trigger factor when it is bound to the ribosome.

Its function is as follows. One of the early assembly proteins it binds 23S rRNA. One of the proteins that surrounds the polypeptide exit tunnel on the outside of the ribosome. Forms the main docking site for trigger factor binding to the ribosome. This Xylella fastidiosa (strain 9a5c) protein is Large ribosomal subunit protein uL23.